A 447-amino-acid chain; its full sequence is Tubulin beta-1 chain (447 aa).

GTP is bound at residue Q11. Phosphoserine is present on S40. GTP is bound by residues E69, S138, G142, T143, G144, N204, and N226. E69 lines the Mg(2+) pocket. S339 is modified (phosphoserine). A disordered region spans residues 427–447; the sequence is EATADEDAEFEEEQEAEVDEN. Residues 429-447 are compositionally biased toward acidic residues; the sequence is TADEDAEFEEEQEAEVDEN.

Belongs to the tubulin family. Dimer of alpha and beta chains. A typical microtubule is a hollow water-filled tube with an outer diameter of 25 nm and an inner diameter of 15 nM. Alpha-beta heterodimers associate head-to-tail to form protofilaments running lengthwise along the microtubule wall with the beta-tubulin subunit facing the microtubule plus end conferring a structural polarity. Microtubules usually have 13 protofilaments but different protofilament numbers can be found in some organisms and specialized cells. Interacts with mgr and Vhl. The cofactor is Mg(2+).

The protein localises to the cytoplasm. It is found in the cytoskeleton. Functionally, tubulin is the major constituent of microtubules, a cylinder consisting of laterally associated linear protofilaments composed of alpha- and beta-tubulin heterodimers. Microtubules grow by the addition of GTP-tubulin dimers to the microtubule end, where a stabilizing cap forms. Below the cap, tubulin dimers are in GDP-bound state, owing to GTPase activity of alpha-tubulin. This chain is Tubulin beta-1 chain (betaTub56D), found in Drosophila melanogaster (Fruit fly).